Reading from the N-terminus, the 534-residue chain is Cyclin-L1 (534 aa).

Cyclin-like stretches follow at residues 94-196 (ELIQ…RVLK) and 209-293 (KIIV…KILQ). The disordered stretch occupies residues 327–534 (LPEGAPVLDN…DHPGHSRHRR (208 aa)). Basic and acidic residues predominate over residues 389 to 399 (KGRESRSRSGS). Composition is skewed to low complexity over residues 400–412 (RDQS…SRSA) and 437–453 (RSGS…TYKS). The RS stretch occupies residues 400–436 (RDQSYSRSPSRSASPKHRKSESYSTSSGSKSHSRSRS). Positions 468–485 (SAHKARKSRSRSSSRSRS) are enriched in basic residues. A compositionally biased stretch (basic and acidic residues) spans 486-495 (RSRERSDHSG). The span at 496–511 (KYKKKSHYYRNHRHER) shows a compositional bias: basic residues. Residues 512–528 (SRSYERASHRYDRDHPG) are compositionally biased toward basic and acidic residues.

Belongs to the cyclin family. Cyclin L subfamily.

The protein resides in the nucleus speckle. It is found in the nucleus. The protein localises to the nucleoplasm. In terms of biological role, involved in pre-mRNA splicing. This Gallus gallus (Chicken) protein is Cyclin-L1 (CCNL1).